The sequence spans 382 residues: 1-deoxy-D-xylulose 5-phosphate reductoisomerase (382 aa).

NADPH is bound by residues T10, G11, S12, I13, G36, and N122. 1-deoxy-D-xylulose 5-phosphate is bound at residue K123. E124 is a binding site for NADPH. Residue D148 participates in Mn(2+) binding. Residues S149, E150, S174, and H197 each contribute to the 1-deoxy-D-xylulose 5-phosphate site. Residue E150 coordinates Mn(2+). G203 is an NADPH binding site. 1-deoxy-D-xylulose 5-phosphate is bound by residues S210, N215, K216, and E219. Residue E219 participates in Mn(2+) binding.

It belongs to the DXR family. Requires Mg(2+) as cofactor. Mn(2+) is required as a cofactor.

It carries out the reaction 2-C-methyl-D-erythritol 4-phosphate + NADP(+) = 1-deoxy-D-xylulose 5-phosphate + NADPH + H(+). It participates in isoprenoid biosynthesis; isopentenyl diphosphate biosynthesis via DXP pathway; isopentenyl diphosphate from 1-deoxy-D-xylulose 5-phosphate: step 1/6. Its function is as follows. Catalyzes the NADPH-dependent rearrangement and reduction of 1-deoxy-D-xylulose-5-phosphate (DXP) to 2-C-methyl-D-erythritol 4-phosphate (MEP). The polypeptide is 1-deoxy-D-xylulose 5-phosphate reductoisomerase (Chlorobium phaeobacteroides (strain BS1)).